Consider the following 516-residue polypeptide: Alpha-(1-&gt;6)-mannopyranosyltransferase A (516 aa).

At Thr2 the chain carries N-acetylthreonine. 13 consecutive transmembrane segments (helical) span residues 38-58, 78-98, 112-132, 174-194, 198-218, 232-252, 278-298, 326-346, 350-370, 385-405, 414-434, 454-474, and 477-497; these read ARLG…AGSV, GLVL…LAWL, FTMR…VPVF, ITTA…TVIV, VVAG…LLVW, PTAL…MGGV, IILI…LPFL, LLIF…GLGW, LAGS…ANVI, LLRI…PLLW, AALT…PAAL, AIAA…PDGS, and MYSW…WYVL.

This sequence belongs to the MptA/B family.

Its subcellular location is the membrane. In terms of biological role, involved in the latter stages of the biosynthesis of the alpha-(1-&gt;6) mannan core of lipomannan (LM). Catalyzes the addition of alpha-(1-&gt;6)-mannose residue. This is Alpha-(1-&gt;6)-mannopyranosyltransferase A (mptA) from Mycobacterium tuberculosis (strain ATCC 25618 / H37Rv).